Here is a 186-residue protein sequence, read N- to C-terminus: uncharacterized protein (186 aa).

This is an uncharacterized protein from Haemophilus influenzae (strain ATCC 51907 / DSM 11121 / KW20 / Rd).